The primary structure comprises 293 residues: Probable xyloglucan endotransglucosylase/hydrolase protein B (293 aa).

The first 21 residues, 1 to 21 (MASSLLILCLVLVSLASSALC), serve as a signal peptide directing secretion. The GH16 domain occupies 23–220 (APRRPVDVPF…WSKAPFVAEY (198 aa)). Glu-106 functions as the Nucleophile in the catalytic mechanism. Glu-110 (proton donor) is an active-site residue. Glu-110 is a binding site for xyloglucan. Asn-114 carries N-linked (GlcNAc...) asparagine glycosylation. Residues 123-125 (QTN), 133-135 (DRE), 199-200 (DW), and Gly-204 contribute to the xyloglucan site. Cystine bridges form between Cys-228-Cys-237 and Cys-274-Cys-287. Arg-279 contacts xyloglucan.

Belongs to the glycosyl hydrolase 16 family. XTH group 1 subfamily. Post-translationally, contains at least one intrachain disulfide bond essential for its enzymatic activity. As to expression, predominantly expressed in the phloem fibers of growing internodes. Weakly or not expressed in the xylem. In the internode, it is expressed closer to the bottom of the internode compared to XTHA.

The protein localises to the secreted. It localises to the cell wall. It is found in the extracellular space. The protein resides in the apoplast. It carries out the reaction breaks a beta-(1-&gt;4) bond in the backbone of a xyloglucan and transfers the xyloglucanyl segment on to O-4 of the non-reducing terminal glucose residue of an acceptor, which can be a xyloglucan or an oligosaccharide of xyloglucan.. Functionally, catalyzes xyloglucan endohydrolysis (XEH) and/or endotransglycosylation (XET). Cleaves and religates xyloglucan polymers, an essential constituent of the primary cell wall, and thereby participates in cell wall construction of growing tissues. The sequence is that of Probable xyloglucan endotransglucosylase/hydrolase protein B (XTHB) from Phaseolus angularis (Azuki bean).